The chain runs to 201 residues: Recombination protein RecR (201 aa).

The C4-type zinc-finger motif lies at 57-72 (CADCRTFTEQEVCNIC). Residues 81 to 176 (GQICVVESPA…EASRIAHGVP (96 aa)) form the Toprim domain.

Belongs to the RecR family.

In terms of biological role, may play a role in DNA repair. It seems to be involved in an RecBC-independent recombinational process of DNA repair. It may act with RecF and RecO. The sequence is that of Recombination protein RecR from Escherichia coli O6:K15:H31 (strain 536 / UPEC).